Reading from the N-terminus, the 681-residue chain is Cryptochrome-1 (681 aa).

A CNT1, binds chromophores to sense blue light and mediate CRY dimerization region spans residues 1 to 489 (MSGSVSGCGS…AKARLHEALS (489 aa)). The region spanning 12 to 141 (GCSIVWFRRD…AVRSFNADLL (130 aa)) is the Photolyase/cryptochrome alpha/beta domain. A disulfide bond links Cys80 and Cys190. An FAD-binding site is contributed by Tyr235. Asn238 provides a ligand contact to Mg(2+). Position 239 (Arg239) interacts with ATP. Positions 241, 244, and 246 each coordinate Mg(2+). FAD-binding positions include 247–251 (TSFLS) and Ser293. His358 is a Mg(2+) binding site. Residues Asp359 and 390 to 392 (DAD) each bind FAD. 359-360 (DR) contacts ATP. Asp409 lines the ATP pocket. The interval 490–681 (QMWQLEAASR…LNWRRLSQTG (192 aa)) is CCT1/CCE1, mediates blue light signaling. 2 disordered regions span residues 525 to 598 (RDIT…EPAS) and 616 to 664 (STED…TSSY). Residues 583 to 598 (MVNTNQAQQRRAEPAS) show a composition bias toward polar residues. Position 616 is a phosphoserine (Ser616). A Phosphothreonine modification is found at Thr621.

It belongs to the DNA photolyase class-1 family. Homodimer. Interacts with ADO1, COP1 and PHYA. Interacts specifically with the dark/far-red (Pr) state of PHYB, but not with the red light-activated (Pfr). Interacts with PIF4 and PIF5 in the nucleus in response to low blue light (LBL). Binds to SPA1 and SPA4 in response to blue light, this interaction prevents SPA1/COP1 complex formation and thus avoid COP1-dependent degradation of the transcription factor HY5 by the proteasome and promotes hypocotyl elongation. Interacts with TCP2. Binding to ATP mediates conformational changes which facilitate flavin binding. Requires FAD as cofactor. The cofactor is (6R)-5,10-methylene-5,6,7,8-tetrahydrofolate. Post-translationally, autophosphorylated; in response to blue light and when in complex with FAD cofactor. Kinase activity is optimal in the presence of magnesium ions, about 30 percent of the optimal activity in the presence of manganese ions, but inactive with calcium ions. Adopts an open conformation when phosphorylated upon photoexcitation and thus interacts with signaling partner proteins. In terms of tissue distribution, widely expressed. Expressed in the aerial tissues (e.g. cotyledons and leaf primordia), but not detected in the roots.

Its subcellular location is the cytoplasm. The protein resides in the nucleus. It is found in the PML body. Its activity is regulated as follows. Light exposure induces a conformational change in the C-terminal domain CCT1 required for activity. In terms of biological role, photoreceptor that mediates primarily blue light inhibition of hypocotyl elongation and photoperiodic control of floral initiation, and regulates other light responses, including circadian rhythms, tropic growth, stomata opening, guard cell development, root development, bacterial and viral pathogen responses, abiotic stress responses, cell cycles, programmed cell death, apical dominance, fruit and ovule development, seed dormancy, and magnetoreception. Photoexcited cryptochromes interact with signaling partner proteins to alter gene expression at both transcriptional and post-translational levels and, consequently, regulate the corresponding metabolic and developmental programs. Blue-light absorbing flavoprotein that activates reversible flavin photoreduction via an electron transport chain comprising a tryptophan triad (W-324, W-377 and W-400), accompanied by a large conformational change upon photoexcitation, or via an alternative electron transport that involves small metabolites, including NADPH, NADH, and ATP. The half-life of the activated signaling state is about 5 minutes. Also involved in the detection of blue/green ratio in light (shade under leaf canopies) and subsequent adaptations on plant growth and development. In darkness, the dark reoxidation of flavin occurs and leads to inactivated state. Perceives low blue light (LBL) and responds by directly contacting two bHLH transcription factors, PIF4 and PIF5, at chromatin on E-box variant 5'-CA[CT]GTG-3' to promote their activity and stimulate specific gene expression to adapt global physiology (e.g. hypocotyl elongation and hyponastic growth in low blue light). When activated by high-intensity blue light, catalyzes direct enzymatic conversion of molecular oxygen O(2) to reactive oxygen species (ROS) and hydrogen peroxide H(2)O(2) in vitro. ROS accumulation upon activation by blue light leads to cell death in protoplasts. Seems essential for blue-light-triggered and singlet oxygen-mediated programmed cell death (PCD). Required for the induction of nuclear genes encoding photoprotective components by GATA24 and GATA28 in extreme light intensities that exceed the electron utilization capacity of the chloroplast. Involved in shortening the circadian clock period, especially at 27 degrees Celsius, in blue light (BL) and required to maintain clock genes expression rhythm. Mediates blue light-induced gene expression and hypocotyl elongation through the inhibition of COP1-mediated degradation of the transcription factors BIT1 and HY5 and via the activation of anion channels at the plasma membrane, probably via auxin signaling. Required for the hypocotyl hook formation in darkness. Involved in blue light-dependent stomatal opening, CHS gene expression, transpiration, inhibition of stem growth and increase of root growth, probably by regulating abscisic acid (ABA). Prevents lateral roots growth by inhibiting auxin transport. Necessary for shade avoidance syndrome (SAS), characterized by leaf hyponasty and reduced lamina/petiole ratio, when exposed to blue light attenuation. Together with phototropins, involved in phototropism regulation by various blue light fluence; blue light attenuates phototropism in high fluence rates (100 umol.m-2.s-1) but enhances phototropism in low fluence rates (&lt;1.0 umol.m-2.s-1). Required for blue/UV-A wavelengths-mediated inhibition of explants shoot regeneration in vitro (e.g. new shoot apical meristems regeneration from excised cotyledons). Modulates anthocyanin accumulation in a PHYA-dependent manner in far-red-light. Acts as a PHYA/PHYB-dependent modulator of chlorophyll accumulation in red light. Contributes to most blue light deetiolation responses. May act as a chemical magnetoreceptor, via magnetically sensitive kinetics and quantum yields of photo-induced flavin / tryptophan radical pairs. The effect of near-null magnetic field on flowering is altered by changes of blue light cycle and intensity in a CRY1/CRY2-dependent manner. Involved in the strigolactone signaling that regulates hypocotyl growth in response to blue light. Modulates temperature-dependent growth and physiology maintenance, especially at warm ambient temperatures (e.g. 27 degrees Celsius) and in white light and low-light conditions, via HFR1-dependent activity; this process requires PTAC12/HMR/PAP5 (transcriptional transactivator). Its function is as follows. Implicated in promoting R protein-mediated resistance to Pseudomonas syringae pv. tomato (Pst.) DC3000 under continuous light conditions. Promotes systemic acquired resistance (SAR) and PR gene expression triggered by P.syringae. The protein is Cryptochrome-1 of Arabidopsis thaliana (Mouse-ear cress).